Consider the following 347-residue polypeptide: Tryptophan--tRNA ligase (347 aa).

Residues 10–12 (QAS) and 18–19 (GN) contribute to the ATP site. The 'HIGH' region motif lies at 11–19 (ASGRQHLGN). D140 serves as a coordination point for L-tryptophan. ATP-binding positions include 152-154 (GND), I191, and 200-204 (KMSKS). Positions 200–204 (KMSKS) match the 'KMSKS' region motif.

Belongs to the class-I aminoacyl-tRNA synthetase family. Homodimer.

Its subcellular location is the cytoplasm. It catalyses the reaction tRNA(Trp) + L-tryptophan + ATP = L-tryptophyl-tRNA(Trp) + AMP + diphosphate + H(+). Functionally, catalyzes the attachment of tryptophan to tRNA(Trp). The protein is Tryptophan--tRNA ligase of Mycoplasma genitalium (strain ATCC 33530 / DSM 19775 / NCTC 10195 / G37) (Mycoplasmoides genitalium).